Here is a 100-residue protein sequence, read N- to C-terminus: U12-ctenitoxin-Pn1a (100 aa).

An N-terminal signal peptide occupies residues 1–28 (MKYRIFKMKYTLLFLSVIALVHIFAVEA). A propeptide spanning residues 29 to 41 (KDEPESDALVPQE) is cleaved from the precursor. Intrachain disulfides connect cysteine 44/cysteine 58, cysteine 51/cysteine 64, cysteine 57/cysteine 82, cysteine 66/cysteine 80, and cysteine 90/cysteine 97.

The protein belongs to the neurotoxin 09 (Tx3-6) family. Expressed by the venom gland.

The protein resides in the secreted. Probable neurotoxin. This chain is U12-ctenitoxin-Pn1a, found in Phoneutria nigriventer (Brazilian armed spider).